Consider the following 492-residue polypeptide: Glutamyl-tRNA(Gln) amidotransferase subunit A (492 aa).

Residues lysine 79 and serine 154 each act as charge relay system in the active site. The active-site Acyl-ester intermediate is the serine 178.

The protein belongs to the amidase family. GatA subfamily. In terms of assembly, heterotrimer of A, B and C subunits.

The enzyme catalyses L-glutamyl-tRNA(Gln) + L-glutamine + ATP + H2O = L-glutaminyl-tRNA(Gln) + L-glutamate + ADP + phosphate + H(+). In terms of biological role, allows the formation of correctly charged Gln-tRNA(Gln) through the transamidation of misacylated Glu-tRNA(Gln) in organisms which lack glutaminyl-tRNA synthetase. The reaction takes place in the presence of glutamine and ATP through an activated gamma-phospho-Glu-tRNA(Gln). This is Glutamyl-tRNA(Gln) amidotransferase subunit A from Acinetobacter baylyi (strain ATCC 33305 / BD413 / ADP1).